A 702-amino-acid polypeptide reads, in one-letter code: Threonine--tRNA ligase (702 aa).

The interval 1–30 (MSAPVHPVPGADGGDPLRPATPGLRSPQVP) is disordered. A TGS domain is found at 15 to 84 (DPLRPATPGL…DVDVEVTPVP (70 aa)). The interval 279-585 (DHRKLGIELD…LTEHYAGAFP (307 aa)) is catalytic. Residues C384, H435, and H562 each contribute to the Zn(2+) site.

This sequence belongs to the class-II aminoacyl-tRNA synthetase family. In terms of assembly, homodimer. The cofactor is Zn(2+).

The protein localises to the cytoplasm. It catalyses the reaction tRNA(Thr) + L-threonine + ATP = L-threonyl-tRNA(Thr) + AMP + diphosphate + H(+). Catalyzes the attachment of threonine to tRNA(Thr) in a two-step reaction: L-threonine is first activated by ATP to form Thr-AMP and then transferred to the acceptor end of tRNA(Thr). Also edits incorrectly charged L-seryl-tRNA(Thr). In Mycobacterium leprae (strain Br4923), this protein is Threonine--tRNA ligase.